The sequence spans 399 residues: Methylthioribose kinase (399 aa).

Residues Asn-40, Lys-57, and 111 to 113 (EDL) contribute to the ATP site. Asp-229 provides a ligand contact to substrate. Position 246-248 (246-248 (DAE)) interacts with ATP. Arg-344 lines the substrate pocket.

This sequence belongs to the methylthioribose kinase family. In terms of assembly, homodimer.

It catalyses the reaction 5-(methylsulfanyl)-D-ribose + ATP = 5-(methylsulfanyl)-alpha-D-ribose 1-phosphate + ADP + H(+). It participates in amino-acid biosynthesis; L-methionine biosynthesis via salvage pathway; S-methyl-5-thio-alpha-D-ribose 1-phosphate from S-methyl-5'-thioadenosine (hydrolase route): step 2/2. Its function is as follows. Catalyzes the phosphorylation of methylthioribose into methylthioribose-1-phosphate. This Cronobacter sakazakii (strain ATCC BAA-894) (Enterobacter sakazakii) protein is Methylthioribose kinase.